The following is an 89-amino-acid chain: Small ribosomal subunit protein uS17 (89 aa).

Belongs to the universal ribosomal protein uS17 family. In terms of assembly, part of the 30S ribosomal subunit.

In terms of biological role, one of the primary rRNA binding proteins, it binds specifically to the 5'-end of 16S ribosomal RNA. The protein is Small ribosomal subunit protein uS17 of Chlorobaculum tepidum (strain ATCC 49652 / DSM 12025 / NBRC 103806 / TLS) (Chlorobium tepidum).